The following is a 214-amino-acid chain: Killer cell lectin-like receptor subfamily B member 1 (214 aa).

The Cytoplasmic segment spans residues 1–42; sequence MDAPVLYAELHLANTQGLRCTSPPSPRQDACWGSGWHRVALK. The chain crosses the membrane as a helical; Signal-anchor for type II membrane protein span at residues 43–63; that stretch reads LGCVGLILLLMGLSVLVGFLV. The Extracellular portion of the chain corresponds to 64-214; it reads QKPPIEKCSV…WICQKTLKRV (151 aa). The C-type lectin domain occupies 98–208; that stretch reads HWNKCLFISQ…CSSDNHWICQ (111 aa). 2 cysteine pairs are disulfide-bonded: Cys-119–Cys-207 and Cys-186–Cys-199.

It localises to the membrane. This is Killer cell lectin-like receptor subfamily B member 1 (Klrb1) from Rattus norvegicus (Rat).